Reading from the N-terminus, the 373-residue chain is Dof zinc finger protein 3 (373 aa).

Positions 1–23 are disordered; the sequence is MASGGALSPVEEKPTVVKTTKAE. A compositionally biased stretch (basic and acidic residues) spans 10–23; that stretch reads VEEKPTVVKTTKAE. A Dof-type zinc finger spans residues 45 to 99; the sequence is PCCPRCNSIKTKFCYYNNYSMAQPRYFCRECRRYWTQGGSLRNVPVGGGCRKSKR. Residues Cys-47, Cys-50, Cys-72, and Cys-75 each contribute to the Zn(2+) site. Residues 297 to 327 form a disordered region; that stretch reads ALGGADEQQGGGDGGEAVMTKDTGGGASSSA.

Interacts with RISBZ1/BZIP58.

The protein localises to the nucleus. Functionally, transcriptional activator that binds specifically to the DNA consensus core sequence 5'-AAAG-3' also known as prolamin box. Can activate the expression of genes encoding for the seed storage proteins glutelin, prolamin and globulin. Functions synergistically with RISBZ/BZIP58 to positively regulate quantitatively many seed storage proteins. Functions synergistically with RISBZ1/BZIP58 to positively regulate some metabolic enzymes, such as alanine aminotransferase and pyruvate phosphate dikinase, that are expressed in developing seeds. Functions synergistically with RISBZ1/BZIP58 to positively regulate genes that are key players in the development of aleurone layers. Functions synergistically with RISBZ1/BZIP58 to positively regulate the glutelin GLUD-1 gene in endosperm of developing seeds. Can activate the expression of the bifunctional lysine-degrading enzyme, lysine ketoglutarate reductase/saccharopine dehydrogenase (LKR/SDH), one of the key regulators determining free lysine content in plants. In germinating seeds, involved in the gibberellin-mediated activation of the alpha-amylase AMY1.1/AMY1A gene. The polypeptide is Dof zinc finger protein 3 (Oryza sativa subsp. japonica (Rice)).